A 318-amino-acid polypeptide reads, in one-letter code: NAD(P)H-dependent D-xylose reductase (318 aa).

Tyr48 functions as the Proton donor in the catalytic mechanism. Substrate is bound at residue His110. NAD(+) is bound by residues 165–166, 214–223, and 270–280; these read SN, SNFGPLSFLE, and KSTFPNTLAVN.

The protein belongs to the aldo/keto reductase family.

The enzyme catalyses xylitol + NAD(+) = D-xylose + NADH + H(+). It catalyses the reaction xylitol + NADP(+) = D-xylose + NADPH + H(+). The protein operates within carbohydrate metabolism; D-xylose degradation. In terms of biological role, reduces D-xylose into xylitol. Has a preference for NADPH, but can also utilize NADH as cosubstrate. The sequence is that of NAD(P)H-dependent D-xylose reductase (XYL1) from Pachysolen tannophilus (Yeast).